The chain runs to 1478 residues: MVLEQDLDPFVGGNWMNSAYKGFTFLSATWLAPNIYLLISGCLQYFYEVRKRSHYFHFRRFWTIWLKSLVIMVLLFTHIYDCYKTNESVWNVLSIITYFLALFLHVVEQPTLRIPMASLLMFWLFKFLASALVLLLRPNYTMFPMLNVVPSITFFCSLVCLLAEIYVPPANRVWYPDDAAELEETGLRPSRFTYANIFSRISFGWLSPLMKFGYRNYLTESDAWSLPPAERSSNLTIVFEKNWISHAKKKKSSLYMWGVLFLNHWKLTVVIIVLKLVQDVVAFIQPNLIRKIVIFVSSYSSEHPQPPQVGFSLAIAMFLTNVVQTALLQQYFQLGMVLGMRWRSELITAIYRKSLRLSSAARQSRSVGDIVNYMSVDTQKVCDLTMFLFVIVSGPFQIVLALTNLYHLVGYGALSGAFVTFLLFPCNVVIASIFKRFQNRQMKNKDARSQFMTEIINNIRSIKLYAWENIFLQKLLQLRNTRELRMLKKIGIVNTIGNFTWLFAPILVSAATFGTFIVLYGKTRVLSVDIVFACLSLFNLLQFPLTMLPIVVSSVLEASVAISRIYGFLTAGELDSNAVQRYPANKEPSGVCLEIKKGTFSWSGPGQNAAEPTLRDIDFVARRGELCCIVGKVGMGKSSLLEACLGNMQKHSGSVFRCGSIAYAAQQPWILNATIQENILFGLELDPEFYEKTIRACCLLRDFEILADGDQTEVGEKGISLSGGQKARISLARAVYSRSDIYLLDDILSAVDQHVNRDLVRNLLGSKGLLRSRCVILSTNSLTVLKEASMIYMLRNGKIIESGSFTQLSSSPDSQLFQLLSEFSKKDTASSTGADTPLSRSQSVITSSTDVTSSASRSSDTVSNYPKATIKGTGRIRKRLTDEDNVKATGQAAEKMERGKVKWKVYWTYFKACSLFLIFLYFLFIIGGIGMNVGTNVWLKHWSEVNTQLGYNPKPYFYLGIYTLFGLLSCALISLSSLTITVFCAIKSCRYLHDSMVKAVLRAPMSFFETTPTGRILNRFSSDVYRVDEVISRVFMFFFRNLFQIVFVLAVICYSSPMFMILIVPLFFLYRYNQVYYTQTSRELKRLDSVTRSPLYAHFQESLGGLSTIRAYDMEDTFISENDIRVDTNHRIWFLYFSSNRWQAIRVEAIGALVVFSSAFFGVLSAVRGNPNSGLVGLSLSYAVQITQSLTFVVRQSVDVETNIVSVERMLEYIGLPSEAPSIIPDHRPPEGWPSHGAIKFDHYSVRYRENLPLVLNDISVNIKPQEKIGIVGRTGAGKSTLTLALFRLIEPTSGDIQLDDINITSIGLHDLRSRLAIIPQENQAFEGTIRENLDPNANATDEEIWHALEAASLKQFIQTLDGGLYSRVTEGGANLSSGQRQLMCLTRALLTPTRVLLLDEATAAVDVETDAIVQRTIRERFNDRTILTIAHRINTVMDSNRILVLDHGKVVEFDSTKKLLENKASLFYSLAKESGLI.

Over 1-25 (MVLEQDLDPFVGGNWMNSAYKGFTF) the chain is Vacuolar. A helical transmembrane segment spans residues 26–46 (LSATWLAPNIYLLISGCLQYF). Residues 47–65 (YEVRKRSHYFHFRRFWTIW) are Cytoplasmic-facing. The helical transmembrane segment at 66 to 85 (LKSLVIMVLLFTHIYDCYKT) threads the bilayer. A glycan (N-linked (GlcNAc...) asparagine) is linked at asparagine 86. The Vacuolar portion of the chain corresponds to 86–90 (NESVW). Residues 91–104 (NVLSIITYFLALFL) form a helical membrane-spanning segment. Residues 105-116 (HVVEQPTLRIPM) lie on the Cytoplasmic side of the membrane. Residues 117 to 137 (ASLLMFWLFKFLASALVLLLR) form a helical membrane-spanning segment. At 138–154 (PNYTMFPMLNVVPSITF) the chain is on the vacuolar side. N-linked (GlcNAc...) asparagine glycosylation occurs at asparagine 139. A helical membrane pass occupies residues 155-175 (FCSLVCLLAEIYVPPANRVWY). The Cytoplasmic segment spans residues 176–259 (PDDAAELEET…KKSSLYMWGV (84 aa)). Residues 260 to 280 (LFLNHWKLTVVIIVLKLVQDV) traverse the membrane as a helical segment. The 290-residue stretch at 268–557 (TVVIIVLKLV…LPIVVSSVLE (290 aa)) folds into the ABC transmembrane type-1 1 domain. At 281–310 (VAFIQPNLIRKIVIFVSSYSSEHPQPPQVG) the chain is on the vacuolar side. A helical membrane pass occupies residues 311 to 331 (FSLAIAMFLTNVVQTALLQQY). Over 332–387 (FQLGMVLGMRWRSELITAIYRKSLRLSSAARQSRSVGDIVNYMSVDTQKVCDLTMF) the chain is Cytoplasmic. A helical membrane pass occupies residues 388–408 (LFVIVSGPFQIVLALTNLYHL). The Vacuolar portion of the chain corresponds to 409 to 411 (VGY). A helical membrane pass occupies residues 412 to 432 (GALSGAFVTFLLFPCNVVIAS). The Cytoplasmic portion of the chain corresponds to 433-495 (IFKRFQNRQM…MLKKIGIVNT (63 aa)). Residues 496 to 516 (IGNFTWLFAPILVSAATFGTF) form a helical membrane-spanning segment. Over 517–539 (IVLYGKTRVLSVDIVFACLSLFN) the chain is Vacuolar. Residues 540 to 560 (LLQFPLTMLPIVVSSVLEASV) traverse the membrane as a helical segment. Residues 561–910 (AISRIYGFLT…VKWKVYWTYF (350 aa)) lie on the Cytoplasmic side of the membrane. In terms of domain architecture, ABC transporter 1 spans 593–821 (LEIKKGTFSW…PDSQLFQLLS (229 aa)). ATP is bound at residue 631–638 (GKVGMGKS). Residues 828–867 (TASSTGADTPLSRSQSVITSSTDVTSSASRSSDTVSNYPK) form a disordered region. A compositionally biased stretch (polar residues) spans 829–840 (ASSTGADTPLSR). Residues serine 839, serine 843, and serine 863 each carry the phosphoserine modification. Over residues 841 to 863 (SQSVITSSTDVTSSASRSSDTVS) the composition is skewed to low complexity. A helical transmembrane segment spans residues 911–931 (KACSLFLIFLYFLFIIGGIGM). The ABC transmembrane type-1 2 domain maps to 918-1202 (IFLYFLFIIG…VVRQSVDVET (285 aa)). Residues 932–968 (NVGTNVWLKHWSEVNTQLGYNPKPYFYLGIYTLFGLL) lie on the Vacuolar side of the membrane. The helical transmembrane segment at 969–990 (SCALISLSSLTITVFCAIKSCR) threads the bilayer. Topologically, residues 991-1033 (YLHDSMVKAVLRAPMSFFETTPTGRILNRFSSDVYRVDEVISR) are cytoplasmic. Residues 1034 to 1054 (VFMFFFRNLFQIVFVLAVICY) form a helical membrane-spanning segment. Position 1055 (serine 1055) is a topological domain, vacuolar. The helical transmembrane segment at 1056 to 1076 (SPMFMILIVPLFFLYRYNQVY) threads the bilayer. Topologically, residues 1077–1147 (YTQTSRELKR…SSNRWQAIRV (71 aa)) are cytoplasmic. The chain crosses the membrane as a helical span at residues 1148–1168 (EAIGALVVFSSAFFGVLSAVR). The Vacuolar segment spans residues 1169–1172 (GNPN). The helical transmembrane segment at 1173–1193 (SGLVGLSLSYAVQITQSLTFV) threads the bilayer. Residues 1194–1478 (VRQSVDVETN…YSLAKESGLI (285 aa)) lie on the Cytoplasmic side of the membrane. The region spanning 1239-1473 (IKFDHYSVRY…KASLFYSLAK (235 aa)) is the ABC transporter 2 domain. Residue 1273 to 1280 (GRTGAGKS) participates in ATP binding.

Belongs to the ABC transporter superfamily. ABCC family. Conjugate transporter (TC 3.A.1.208) subfamily.

The protein localises to the vacuole membrane. Involved in vacuolar sequestration of glutathione S-conjugates. Together with abc4, required for accumulation of a red pigment (ade pigment) in the vacuole of a mutant affected in the adenine biosynthetic pathway. This is ATP-binding cassette transporter abc2 (abc2) from Schizosaccharomyces pombe (strain 972 / ATCC 24843) (Fission yeast).